The chain runs to 423 residues: Serine hydroxymethyltransferase (423 aa).

(6S)-5,6,7,8-tetrahydrofolate contacts are provided by residues L121 and 125-127 (GHL). N6-(pyridoxal phosphate)lysine is present on K230. Residue 355-357 (SPF) coordinates (6S)-5,6,7,8-tetrahydrofolate.

It belongs to the SHMT family. As to quaternary structure, homodimer. Pyridoxal 5'-phosphate is required as a cofactor.

It localises to the cytoplasm. It carries out the reaction (6R)-5,10-methylene-5,6,7,8-tetrahydrofolate + glycine + H2O = (6S)-5,6,7,8-tetrahydrofolate + L-serine. It functions in the pathway one-carbon metabolism; tetrahydrofolate interconversion. It participates in amino-acid biosynthesis; glycine biosynthesis; glycine from L-serine: step 1/1. Its function is as follows. Catalyzes the reversible interconversion of serine and glycine with tetrahydrofolate (THF) serving as the one-carbon carrier. This reaction serves as the major source of one-carbon groups required for the biosynthesis of purines, thymidylate, methionine, and other important biomolecules. Also exhibits THF-independent aldolase activity toward beta-hydroxyamino acids, producing glycine and aldehydes, via a retro-aldol mechanism. The chain is Serine hydroxymethyltransferase from Hydrogenovibrio crunogenus (strain DSM 25203 / XCL-2) (Thiomicrospira crunogena).